The following is a 207-amino-acid chain: Acyl-homoserine-lactone synthase (207 aa).

This sequence belongs to the autoinducer synthase family.

It catalyses the reaction a fatty acyl-[ACP] + S-adenosyl-L-methionine = an N-acyl-L-homoserine lactone + S-methyl-5'-thioadenosine + holo-[ACP] + H(+). Its function is as follows. Required for the synthesis of N-butanoyl-L-homoserine lactone (BHL), an autoinducer molecule which binds to AhyR. This is Acyl-homoserine-lactone synthase (ahyI) from Aeromonas hydrophila.